We begin with the raw amino-acid sequence, 252 residues long: Imidazole glycerol phosphate synthase subunit HisF (252 aa).

Active-site residues include Asp11 and Asp130.

It belongs to the HisA/HisF family. Heterodimer of HisH and HisF.

The protein resides in the cytoplasm. It catalyses the reaction 5-[(5-phospho-1-deoxy-D-ribulos-1-ylimino)methylamino]-1-(5-phospho-beta-D-ribosyl)imidazole-4-carboxamide + L-glutamine = D-erythro-1-(imidazol-4-yl)glycerol 3-phosphate + 5-amino-1-(5-phospho-beta-D-ribosyl)imidazole-4-carboxamide + L-glutamate + H(+). The protein operates within amino-acid biosynthesis; L-histidine biosynthesis; L-histidine from 5-phospho-alpha-D-ribose 1-diphosphate: step 5/9. In terms of biological role, IGPS catalyzes the conversion of PRFAR and glutamine to IGP, AICAR and glutamate. The HisF subunit catalyzes the cyclization activity that produces IGP and AICAR from PRFAR using the ammonia provided by the HisH subunit. The sequence is that of Imidazole glycerol phosphate synthase subunit HisF from Polynucleobacter necessarius subsp. necessarius (strain STIR1).